The chain runs to 939 residues: Isoleucine--tRNA ligase (939 aa).

Residues 57 to 67 (PYANGEIHIGH) carry the 'HIGH' region motif. Glu-563 is an L-isoleucyl-5'-AMP binding site. A 'KMSKS' region motif is present at residues 604-608 (KMSKS). Lys-607 provides a ligand contact to ATP. The Zn(2+) site is built by Cys-902, Cys-905, Cys-922, and Cys-925.

Belongs to the class-I aminoacyl-tRNA synthetase family. IleS type 1 subfamily. Monomer. The cofactor is Zn(2+).

It localises to the cytoplasm. It catalyses the reaction tRNA(Ile) + L-isoleucine + ATP = L-isoleucyl-tRNA(Ile) + AMP + diphosphate. In terms of biological role, catalyzes the attachment of isoleucine to tRNA(Ile). As IleRS can inadvertently accommodate and process structurally similar amino acids such as valine, to avoid such errors it has two additional distinct tRNA(Ile)-dependent editing activities. One activity is designated as 'pretransfer' editing and involves the hydrolysis of activated Val-AMP. The other activity is designated 'posttransfer' editing and involves deacylation of mischarged Val-tRNA(Ile). The polypeptide is Isoleucine--tRNA ligase (Methylococcus capsulatus (strain ATCC 33009 / NCIMB 11132 / Bath)).